The primary structure comprises 432 residues: Glutamine synthetase, chloroplastic (432 aa).

The GS beta-grasp domain occupies Ile-79–Gly-159. The 267-residue stretch at Lys-166–Val-432 folds into the GS catalytic domain.

Belongs to the glutamine synthetase family. In terms of assembly, homooctamer.

It localises to the plastid. The protein localises to the chloroplast. It carries out the reaction L-glutamate + NH4(+) + ATP = L-glutamine + ADP + phosphate + H(+). In terms of biological role, the light-modulated chloroplast enzyme, encoded by a nuclear gene and expressed primarily in leaves, is responsible for the reassimilation of the ammonia generated by photorespiration. The protein is Glutamine synthetase, chloroplastic (GLN2) of Daucus carota (Wild carrot).